Reading from the N-terminus, the 134-residue chain is Small ribosomal subunit protein uS8c (134 aa).

The protein belongs to the universal ribosomal protein uS8 family. In terms of assembly, part of the 30S ribosomal subunit.

Its subcellular location is the plastid. The protein localises to the chloroplast. Functionally, one of the primary rRNA binding proteins, it binds directly to 16S rRNA central domain where it helps coordinate assembly of the platform of the 30S subunit. In Aethionema grandiflorum (Persian stone-cress), this protein is Small ribosomal subunit protein uS8c (rps8).